A 334-amino-acid polypeptide reads, in one-letter code: N-acetyl-gamma-glutamyl-phosphate reductase (334 aa).

Cys-154 is a catalytic residue.

This sequence belongs to the NAGSA dehydrogenase family. Type 1 subfamily.

Its subcellular location is the cytoplasm. It carries out the reaction N-acetyl-L-glutamate 5-semialdehyde + phosphate + NADP(+) = N-acetyl-L-glutamyl 5-phosphate + NADPH + H(+). Its pathway is amino-acid biosynthesis; L-arginine biosynthesis; N(2)-acetyl-L-ornithine from L-glutamate: step 3/4. Functionally, catalyzes the NADPH-dependent reduction of N-acetyl-5-glutamyl phosphate to yield N-acetyl-L-glutamate 5-semialdehyde. The sequence is that of N-acetyl-gamma-glutamyl-phosphate reductase from Buchnera aphidicola subsp. Acyrthosiphon pisum (strain 5A).